We begin with the raw amino-acid sequence, 232 residues long: Orotidine 5'-phosphate decarboxylase (232 aa).

Residues D14, K36, 63-72, T122, R183, Q192, G212, and R213 each bind substrate; that span reads DLKFHDIPNT. The active-site Proton donor is K65.

This sequence belongs to the OMP decarboxylase family. Type 1 subfamily. Homodimer.

The catalysed reaction is orotidine 5'-phosphate + H(+) = UMP + CO2. The protein operates within pyrimidine metabolism; UMP biosynthesis via de novo pathway; UMP from orotate: step 2/2. Functionally, catalyzes the decarboxylation of orotidine 5'-monophosphate (OMP) to uridine 5'-monophosphate (UMP). The chain is Orotidine 5'-phosphate decarboxylase from Psychrobacter arcticus (strain DSM 17307 / VKM B-2377 / 273-4).